A 272-amino-acid chain; its full sequence is 3-methyl-2-oxobutanoate hydroxymethyltransferase (272 aa).

Mg(2+) contacts are provided by Asp43 and Asp82. 3-methyl-2-oxobutanoate contacts are provided by residues 43–44 (DS), Asp82, and Lys112. Glu114 contributes to the Mg(2+) binding site. Glu179 functions as the Proton acceptor in the catalytic mechanism.

This sequence belongs to the PanB family. Homodecamer; pentamer of dimers. Mg(2+) is required as a cofactor.

The protein resides in the cytoplasm. The enzyme catalyses 3-methyl-2-oxobutanoate + (6R)-5,10-methylene-5,6,7,8-tetrahydrofolate + H2O = 2-dehydropantoate + (6S)-5,6,7,8-tetrahydrofolate. It participates in cofactor biosynthesis; (R)-pantothenate biosynthesis; (R)-pantoate from 3-methyl-2-oxobutanoate: step 1/2. Its function is as follows. Catalyzes the reversible reaction in which hydroxymethyl group from 5,10-methylenetetrahydrofolate is transferred onto alpha-ketoisovalerate to form ketopantoate. In Staphylococcus aureus (strain Mu3 / ATCC 700698), this protein is 3-methyl-2-oxobutanoate hydroxymethyltransferase.